The following is a 347-amino-acid chain: Twinfilin-2 (347 aa).

ADF-H domains follow at residues 3-137 (LVLV…RHIT) and 175-311 (GLAF…DEVH). Residues 314–347 (QHAHKQAFAKPRGPAGKRGNKRLIKGGGENGGNS) are disordered. Positions 338-347 (KGGGENGGNS) are enriched in gly residues.

The protein belongs to the actin-binding proteins ADF family. Twinfilin subfamily. In terms of assembly, interacts with G-actin; ADP-actin form and capping protein (CP).

The protein localises to the cytoplasm. It is found in the cytoskeleton. Its subcellular location is the perinuclear region. Its function is as follows. Actin-binding protein involved in motile and morphological processes. Inhibits actin polymerization, likely by sequestering G-actin. In Danio rerio (Zebrafish), this protein is Twinfilin-2 (twf2).